The sequence spans 105 residues: Large ribosomal subunit protein uL24 (105 aa).

The protein belongs to the universal ribosomal protein uL24 family. Part of the 50S ribosomal subunit.

One of two assembly initiator proteins, it binds directly to the 5'-end of the 23S rRNA, where it nucleates assembly of the 50S subunit. In terms of biological role, one of the proteins that surrounds the polypeptide exit tunnel on the outside of the subunit. The polypeptide is Large ribosomal subunit protein uL24 (Novosphingobium aromaticivorans (strain ATCC 700278 / DSM 12444 / CCUG 56034 / CIP 105152 / NBRC 16084 / F199)).